The primary structure comprises 521 residues: Bacillolysin (521 aa).

A signal peptide spans 1–27 (MGLGKKLSVAVAASFMSLSISLPGVQA). Positions 28-221 (AEGHQLKENQ…ILKQQNKVEH (194 aa)) are cleaved as a propeptide — activation peptide. D360 provides a ligand contact to Ca(2+). H364 is a binding site for Zn(2+). E365 is an active-site residue. Zn(2+) contacts are provided by H368 and E388. Ca(2+) contacts are provided by D399, D402, D404, and E407. The Proton donor role is filled by H449.

It belongs to the peptidase M4 family. The cofactor is Ca(2+). Zn(2+) serves as cofactor.

Its subcellular location is the secreted. The enzyme catalyses Similar, but not identical, to that of thermolysin.. Extracellular zinc metalloprotease. This is Bacillolysin (nprE) from Bacillus subtilis subsp. amylosacchariticus.